The chain runs to 184 residues: ATP synthase subunit delta (184 aa).

Belongs to the ATPase delta chain family. In terms of assembly, F-type ATPases have 2 components, F(1) - the catalytic core - and F(0) - the membrane proton channel. F(1) has five subunits: alpha(3), beta(3), gamma(1), delta(1), epsilon(1). F(0) has three main subunits: a(1), b(2) and c(10-14). The alpha and beta chains form an alternating ring which encloses part of the gamma chain. F(1) is attached to F(0) by a central stalk formed by the gamma and epsilon chains, while a peripheral stalk is formed by the delta and b chains.

The protein localises to the cell membrane. Functionally, f(1)F(0) ATP synthase produces ATP from ADP in the presence of a proton or sodium gradient. F-type ATPases consist of two structural domains, F(1) containing the extramembraneous catalytic core and F(0) containing the membrane proton channel, linked together by a central stalk and a peripheral stalk. During catalysis, ATP synthesis in the catalytic domain of F(1) is coupled via a rotary mechanism of the central stalk subunits to proton translocation. Its function is as follows. This protein is part of the stalk that links CF(0) to CF(1). It either transmits conformational changes from CF(0) to CF(1) or is implicated in proton conduction. The polypeptide is ATP synthase subunit delta (Rickettsia africae (strain ESF-5)).